The sequence spans 116 residues: Large ribosomal subunit protein bL21c (116 aa).

It belongs to the bacterial ribosomal protein bL21 family. In terms of assembly, part of the 50S ribosomal subunit.

The protein resides in the plastid. The protein localises to the chloroplast. Its function is as follows. This protein binds to 23S rRNA. The polypeptide is Large ribosomal subunit protein bL21c (Emiliania huxleyi (Coccolithophore)).